Reading from the N-terminus, the 102-residue chain is Large ribosomal subunit protein eL21 (102 aa).

Residues 1-21 are compositionally biased toward basic residues; it reads MVRRSKGFRSRTRKKLRKKPR. The segment at 1–33 is disordered; that stretch reads MVRRSKGFRSRTRKKLRKKPRERGLSPLGPMTQ.

The protein belongs to the eukaryotic ribosomal protein eL21 family.

In Methanopyrus kandleri (strain AV19 / DSM 6324 / JCM 9639 / NBRC 100938), this protein is Large ribosomal subunit protein eL21.